The sequence spans 757 residues: Mitofusin-2 (757 aa).

The Cytoplasmic portion of the chain corresponds to 1–604; the sequence is MSLLFSRCNS…TQEEFMVSMV (604 aa). Residues 30 to 94 form a part of a helix bundle domain, formed by helices from N-terminal and C-terminal regions region; the sequence is KHFVTAKKKI…VRGISEVLAR (65 aa). The Dynamin-type G domain maps to 93-342; the sequence is ARRHMKVAFF…VRMFEFQNFE (250 aa). Positions 103–110 are G1 motif; it reads GRTSNGKS. 106-111 serves as a coordination point for GTP; it reads SNGKST. A Phosphothreonine; by PINK1 modification is found at Thr111. The tract at residues 129 to 130 is G2 motif; the sequence is TT. Positions 199–202 are G3 motif; it reads DSPG. 258-261 serves as a coordination point for GTP; sequence NRWD. The interval 258 to 261 is G4 motif; sequence NRWD. Position 288 (Glu288) is a region of interest, G5 motif. Ser305 and Lys307 together coordinate GTP. The interval 359 to 385 is part of a helix bundle domain, formed by helices from N-terminal and C-terminal regions; that stretch reads EQHTVRAKQIAEAVRLIMDSLHMAARE. Residues 391–434 adopt a coiled-coil conformation; the sequence is EEMREERQDRLKFIDKQLELLAQDYKLRIKQITEEVERQVSTAM. Phosphoserine; by PINK1 is present on Ser442. Residues 605-625 traverse the membrane as a helical segment; sequence TGLASLTSRTSMGILVVGGVV. A topological domain (mitochondrial intermembrane) is located at residue Trp626. A helical transmembrane segment spans residues 627-647; that stretch reads KAVGWRLIALSFGLYGLLYVY. The Cytoplasmic portion of the chain corresponds to 648 to 757; the sequence is ERLTWTTKAK…FTHQYLQPSR (110 aa). A coiled-coil region spans residues 695-738; it reads TFAHLCQQVDVTRENLEQEIAAMNKKIEVLDSLQSKAKLLRNKA. A part of a helix bundle domain, formed by helices from N-terminal and C-terminal regions region spans residues 722-753; the sequence is EVLDSLQSKAKLLRNKAGWLDSELNMFTHQYL.

The protein belongs to the TRAFAC class dynamin-like GTPase superfamily. Dynamin/Fzo/YdjA family. Mitofusin subfamily. In terms of assembly, forms homomultimers and heteromultimers with MFN1. Oligomerization is essential for mitochondrion fusion. Interacts with VAT1. Interacts with STOML2; may form heterooligomers. Interacts (phosphorylated) with PRKN. Interacts with EIF2AK3. Interacts with THG1L; THG1L probably functions as a guanyl-nucleotide exchange factor/GEF, activating MFN2. Phosphorylated by PINK1. Post-translationally, ubiquitinated by non-degradative ubiquitin by PRKN, promoting mitochondrial fusion; deubiquitination by USP30 inhibits mitochondrial fusion. Ubiquitinated by HUWE1 when dietary stearate (C18:0) levels are low; ubiquitination inhibits mitochondrial fusion. In terms of tissue distribution, ubiquitous; expressed at low level. Highly expressed in heart and kidney.

Its subcellular location is the mitochondrion outer membrane. The enzyme catalyses GTP + H2O = GDP + phosphate + H(+). Functionally, mitochondrial outer membrane GTPase that mediates mitochondrial clustering and fusion. Mitochondria are highly dynamic organelles, and their morphology is determined by the equilibrium between mitochondrial fusion and fission events. Overexpression induces the formation of mitochondrial networks. Membrane clustering requires GTPase activity and may involve a major rearrangement of the coiled coil domains. Plays a central role in mitochondrial metabolism and may be associated with obesity and/or apoptosis processes. Plays an important role in the regulation of vascular smooth muscle cell proliferation. Involved in the clearance of damaged mitochondria via selective autophagy (mitophagy). Is required for PRKN recruitment to dysfunctional mitochondria. Involved in the control of unfolded protein response (UPR) upon ER stress including activation of apoptosis and autophagy during ER stress. Acts as an upstream regulator of EIF2AK3 and suppresses EIF2AK3 activation under basal conditions. In Homo sapiens (Human), this protein is Mitofusin-2.